Here is a 257-residue protein sequence, read N- to C-terminus: Small ribosomal subunit protein uS2 (257 aa).

The protein belongs to the universal ribosomal protein uS2 family.

This Trichlorobacter lovleyi (strain ATCC BAA-1151 / DSM 17278 / SZ) (Geobacter lovleyi) protein is Small ribosomal subunit protein uS2.